A 140-amino-acid chain; its full sequence is Putative pre-16S rRNA nuclease (140 aa).

Belongs to the YqgF nuclease family.

It is found in the cytoplasm. Could be a nuclease involved in processing of the 5'-end of pre-16S rRNA. The protein is Putative pre-16S rRNA nuclease of Yersinia pseudotuberculosis serotype IB (strain PB1/+).